Here is a 580-residue protein sequence, read N- to C-terminus: Transcription factor coe2-B (580 aa).

The interaction with DNA stretch occupies residues 60 to 63 (RKSN). The C5-type zinc-finger motif lies at 148 to 167 (CRVLLTHEVMCSRCCEKKSC). Interaction with DNA stretches follow at residues 194-201 (NCLKTAGN) and 233-236 (NNSK). The IPT/TIG domain occupies 259-341 (PCIKAISPSE…CKGAPGRFIY (83 aa)). The tract at residues 455 to 492 (IRNTSSISPRGYSSSSTPQQSNYSTPSNSMNGYSNVPM) is disordered. The span at 459–481 (SSISPRGYSSSSTPQQSNYSTPS) shows a compositional bias: low complexity. Over residues 482–492 (NSMNGYSNVPM) the composition is skewed to polar residues.

Belongs to the COE family. In embryos, expressed in precursors of primary neurons. In adults, expressed at high levels in the brain, and at low levels in the somatic muscles, testis, and possibly the spleen.

It is found in the nucleus. In terms of biological role, may play a pivotal role in the transcriptional cascade that specifies primary neurons in embryos. Stabilizes the higher neural potential of selected progenitor cells that express neurog2/X-ngnr-1 by maintaining Delta-Notch signaling. Thus ensures the transition between neural competence and irreversible commitment to a neural fate. Also promotes neuronal differentiation by activating neurod1 expression, directly or indirectly. This is Transcription factor coe2-B from Xenopus laevis (African clawed frog).